The chain runs to 314 residues: Short chain dehydrogenase atnD (314 aa).

Positions 41, 66, 90, and 116 each coordinate NADP(+). Active-site proton donor residues include S171 and Y204. NADP(+) contacts are provided by Y204 and K208. K208 acts as the Lowers pKa of active site Tyr in catalysis.

This sequence belongs to the short-chain dehydrogenases/reductases (SDR) family.

It functions in the pathway secondary metabolite biosynthesis. Its function is as follows. Short chain dehydrogenase; part of the gene cluster that mediates the biosynthesis of aspercryptins, linear lipopeptides built from six amino acids including 2 highly unusual and nonproteogenic amino acids, 2-amino-octanoic acid (2aoa) and 2-amino-dodecanol (2adol). The core structure of aspercryptins is as follows: Ser/Ala-Thr-Ile/Val-2aoa-Asn-2adol. The first step of aspercryptin biosynthesis is the generation of the fatty acid precursors, octanoic and dodecanoic acids, by the FAS subunits atnF and atnM. The fatty acid precursors are likely transformed into the corresponding alpha-amino fatty acids in three steps. First, they are hydroxylated by the cytochrome P450 monooxygenase atnE, then oxidized to the corresponding alpha-keto acids by the NAD(P)-dependent oxidoreductase atnD, and finally converted to the alpha-amino fatty acids by the PLP-dependent aminotransferases atnH or atnJ. the alpha-amino fatty acids, 2-amino-octanoic and 2-amino-dodecanoic acids, are recognized, activated, and covalently tethered to the NRPS atnA by its fourth and sixth adenylation domains. The second module of atnA is the Thr module and contains an epimerase (E) domain responsible for the epimerization of Thr to D-allo-Thr. Additionally, despite atnA having only one epimerase domain, the first amino acid of aspercryptin A1 is D-Ser, suggesting that serine is either loaded directly as D-Ser on the first module or that the epimerase domain in the threonine module epimerizes both L-Ser and L-Thr. After condensation of the hexapeptide of aspercryptin, the C-terminal reductase (TE) domain might be involved in the reductive release and production of the aldehyde hexapeptide. Further reduction would generate aspercryptins. The variety of aspercryptins produced reflects the flexibility of the atnA NRPS, allowing incorporation of alanine instead of serine, valine for isoleucine, and a C10 fatty amino alcohol instead of the C12 version. AtnB seems to be involved in the selectivity for Ile versus Val by the third module. Moreover, type B, C and D aspercryptins have an additional N-terminal cichorine, acetyl and propionyl group respectively. The polypeptide is Short chain dehydrogenase atnD (Emericella nidulans (strain FGSC A4 / ATCC 38163 / CBS 112.46 / NRRL 194 / M139) (Aspergillus nidulans)).